The sequence spans 148 residues: Large ribosomal subunit protein uL15 (148 aa).

Residues 1-51 (MNLSNLKPAEGSTKTRKRIGRGPGSGLGGTSTRGHKGAKSRSGYSKKIGFE) are disordered. Over residues 21–31 (RGPGSGLGGTS) the composition is skewed to gly residues.

This sequence belongs to the universal ribosomal protein uL15 family. Part of the 50S ribosomal subunit.

Binds to the 23S rRNA. This Phocaeicola vulgatus (strain ATCC 8482 / DSM 1447 / JCM 5826 / CCUG 4940 / NBRC 14291 / NCTC 11154) (Bacteroides vulgatus) protein is Large ribosomal subunit protein uL15.